A 908-amino-acid chain; its full sequence is 3-phosphoinositide-dependent protein kinase B (908 aa).

Composition is skewed to low complexity over residues asparagine 53–leucine 170, tyrosine 179–tyrosine 189, and glutamine 200–histidine 216. A disordered region spans residues asparagine 53–serine 267. Residues lysine 250 to isoleucine 262 show a composition bias toward polar residues. The Protein kinase domain occupies phenylalanine 271–phenylalanine 527. Residues alanine 281–glycine 283 and lysine 300 contribute to the ATP site. Residues leucine 302 to phenylalanine 346 form a PIF-pocket region. Residues glutamate 349–cysteine 351 and aspartate 355 contribute to the ATP site. Aspartate 394 functions as the Proton acceptor in the catalytic mechanism. Glutamate 398 and aspartate 412 together coordinate ATP. Disordered stretches follow at residues serine 538 to leucine 560 and isoleucine 606 to glutamine 755. The span at serine 607–threonine 684 shows a compositional bias: low complexity. Over residues serine 696 to asparagine 709 the composition is skewed to polar residues. A compositionally biased stretch (low complexity) spans glutamine 710–threonine 741. The PH domain maps to serine 764–leucine 902.

Belongs to the protein kinase superfamily. AGC Ser/Thr protein kinase family. PDPK1 subfamily.

The enzyme catalyses L-seryl-[protein] + ATP = O-phospho-L-seryl-[protein] + ADP + H(+). It catalyses the reaction L-threonyl-[protein] + ATP = O-phospho-L-threonyl-[protein] + ADP + H(+). In Dictyostelium discoideum (Social amoeba), this protein is 3-phosphoinositide-dependent protein kinase B (pdkB).